A 137-amino-acid polypeptide reads, in one-letter code: Small heat shock protein IbpA (137 aa).

The region spanning 28-137 (NQSNGGYPPY…SLKPRRIEIK (110 aa)) is the sHSP domain.

It belongs to the small heat shock protein (HSP20) family. As to quaternary structure, monomer. Forms homomultimers of about 100-150 subunits at optimal growth temperatures. Conformation changes to monomers at high temperatures or high ionic concentrations.

The protein localises to the cytoplasm. In terms of biological role, associates with aggregated proteins, together with IbpB, to stabilize and protect them from irreversible denaturation and extensive proteolysis during heat shock and oxidative stress. Aggregated proteins bound to the IbpAB complex are more efficiently refolded and reactivated by the ATP-dependent chaperone systems ClpB and DnaK/DnaJ/GrpE. Its activity is ATP-independent. This chain is Small heat shock protein IbpA, found in Yersinia pseudotuberculosis serotype O:1b (strain IP 31758).